Reading from the N-terminus, the 329-residue chain is Serine, glycine and glutamine-rich protein (329 aa).

Residues 1 to 16 (MKTVLLFVVLVGLAYC) form the signal peptide. The span at 38 to 48 (SSSSSSSSSSS) shows a compositional bias: low complexity. A disordered region spans residues 38–80 (SSSSSSSSSSSSGGGGSSGGGASGGGGGSSSGGGGASGGGGGG). Residues 49 to 80 (SGGGGSSGGGASGGGGGSSSGGGGASGGGGGG) show a composition bias toward gly residues.

Prismatic layer of shell (at protein level). Expressed primarily in the mantle with highest level in the mantle edge and lower level in the mantle pallium.

It localises to the secreted. This is Serine, glycine and glutamine-rich protein from Pinctada maxima (Silver-lipped pearl oyster).